The primary structure comprises 620 residues: 1-deoxy-D-xylulose-5-phosphate synthase (620 aa).

Residues H80 and 121–123 (GHS) contribute to the thiamine diphosphate site. Mg(2+) is bound at residue D152. Thiamine diphosphate is bound by residues 153-154 (GA), N181, Y288, and E370. N181 lines the Mg(2+) pocket.

The protein belongs to the transketolase family. DXPS subfamily. As to quaternary structure, homodimer. Requires Mg(2+) as cofactor. Thiamine diphosphate serves as cofactor.

The enzyme catalyses D-glyceraldehyde 3-phosphate + pyruvate + H(+) = 1-deoxy-D-xylulose 5-phosphate + CO2. It functions in the pathway metabolic intermediate biosynthesis; 1-deoxy-D-xylulose 5-phosphate biosynthesis; 1-deoxy-D-xylulose 5-phosphate from D-glyceraldehyde 3-phosphate and pyruvate: step 1/1. In terms of biological role, catalyzes the acyloin condensation reaction between C atoms 2 and 3 of pyruvate and glyceraldehyde 3-phosphate to yield 1-deoxy-D-xylulose-5-phosphate (DXP). The protein is 1-deoxy-D-xylulose-5-phosphate synthase of Escherichia coli O127:H6 (strain E2348/69 / EPEC).